A 316-amino-acid polypeptide reads, in one-letter code: Pantothenate kinase (316 aa).

An ATP-binding site is contributed by 95-102 (GSVAVGKS).

This sequence belongs to the prokaryotic pantothenate kinase family.

Its subcellular location is the cytoplasm. The enzyme catalyses (R)-pantothenate + ATP = (R)-4'-phosphopantothenate + ADP + H(+). It functions in the pathway cofactor biosynthesis; coenzyme A biosynthesis; CoA from (R)-pantothenate: step 1/5. In Pectobacterium carotovorum subsp. carotovorum (strain PC1), this protein is Pantothenate kinase.